The sequence spans 523 residues: Type 2 DNA topoisomerase 6 subunit B (523 aa).

Residues Asn48, Asp80, 101-102 (SK), 110-117 (GQQGLGCS), and Lys436 each bind ATP.

Belongs to the TOP6B family. In terms of assembly, homodimer. Heterotetramer of two Top6A and two Top6B chains.

The catalysed reaction is ATP-dependent breakage, passage and rejoining of double-stranded DNA.. In terms of biological role, relaxes both positive and negative superturns and exhibits a strong decatenase activity. The sequence is that of Type 2 DNA topoisomerase 6 subunit B from Methanothermobacter thermautotrophicus (strain ATCC 29096 / DSM 1053 / JCM 10044 / NBRC 100330 / Delta H) (Methanobacterium thermoautotrophicum).